A 530-amino-acid polypeptide reads, in one-letter code: UDP-glucuronosyltransferase 2B31 (530 aa).

An N-terminal signal peptide occupies residues Met1–Gly24. Lys136 bears the N6-succinyllysine mark. N-linked (GlcNAc...) asparagine glycosylation occurs at Asn316. A helical transmembrane segment spans residues Ile495–Phe515.

The protein belongs to the UDP-glycosyltransferase family.

Its subcellular location is the microsome membrane. The protein resides in the endoplasmic reticulum membrane. The catalysed reaction is glucuronate acceptor + UDP-alpha-D-glucuronate = acceptor beta-D-glucuronoside + UDP + H(+). Functionally, UDPGTs are of major importance in the conjugation and subsequent elimination of potentially toxic xenobiotics and endogenous compounds. This isozyme has glucuronidating capacity on phenols, opioids, and carboxylic acid-containing drugs. The protein is UDP-glucuronosyltransferase 2B31 (UGT2B31) of Canis lupus familiaris (Dog).